A 243-amino-acid polypeptide reads, in one-letter code: Clathrin light chain A (243 aa).

Met-1 carries the blocked amino end (Met) modification. 2 disordered regions span residues 1-22 and 49-87; these read MAEL…GVAG and ILDG…GPTD. The segment covering 10–20 has biased composition (gly residues); the sequence is PAGGPALGNGV. The tract at residues 95–157 is involved in binding clathrin heavy chain; it reads VDRLQSEPES…QLQKTKANNR (63 aa). Ser-100 and Ser-201 each carry phosphoserine. Lys-218 is subject to N6-acetyllysine. Ser-231 bears the Phosphoserine mark. Lys-237 bears the N6-acetyllysine mark.

The protein belongs to the clathrin light chain family. In terms of assembly, clathrin coats are formed from molecules containing 3 heavy chains and 3 light chains. Interacts with CALY; the interaction stimulates clathrin self-assembly and clathrin-mediated endocytosis. Interacts with CKAP5 and TACC3 forming the TACC3/ch-TOG/clathrin complex located at spindle inter-microtubules bridges; the complex implicates clathrin triskelions.

The protein resides in the cytoplasmic vesicle membrane. The protein localises to the membrane. It localises to the coated pit. It is found in the cytoplasm. Its subcellular location is the cytoskeleton. The protein resides in the spindle. In terms of biological role, clathrin is the major protein of the polyhedral coat of coated pits and vesicles. Acts as a component of the TACC3/ch-TOG/clathrin complex proposed to contribute to stabilization of kinetochore fibers of the mitotic spindle by acting as inter-microtubule bridge. The protein is Clathrin light chain A (CLTA) of Bos taurus (Bovine).